A 220-amino-acid chain; its full sequence is Adenylate kinase (220 aa).

10-15 is a binding site for ATP; it reads GAGKGT. The interval 30–59 is NMP; it reads STGDLFRANISQQTELGKLAKSYMDEGNLV. AMP is bound by residues T31, R36, 57 to 59, 85 to 88, and Q92; these read NLV and GFPR. The interval 126 to 164 is LID; sequence GRRICRNDSAHVFHVSYKPPKQEGVCDVCGGELYQRDDD. Residues R127 and 137 to 138 contribute to the ATP site; that span reads VF. R161 and R172 together coordinate AMP. G200 is an ATP binding site.

Belongs to the adenylate kinase family. Monomer.

Its subcellular location is the cytoplasm. The enzyme catalyses AMP + ATP = 2 ADP. It participates in purine metabolism; AMP biosynthesis via salvage pathway; AMP from ADP: step 1/1. In terms of biological role, catalyzes the reversible transfer of the terminal phosphate group between ATP and AMP. Plays an important role in cellular energy homeostasis and in adenine nucleotide metabolism. This chain is Adenylate kinase, found in Streptomyces avermitilis (strain ATCC 31267 / DSM 46492 / JCM 5070 / NBRC 14893 / NCIMB 12804 / NRRL 8165 / MA-4680).